The following is a 155-amino-acid chain: Ribosomal RNA large subunit methyltransferase H (155 aa).

S-adenosyl-L-methionine contacts are provided by residues Leu72, Gly103, and 122–127 (LSALTL).

The protein belongs to the RNA methyltransferase RlmH family. As to quaternary structure, homodimer.

The protein localises to the cytoplasm. It catalyses the reaction pseudouridine(1915) in 23S rRNA + S-adenosyl-L-methionine = N(3)-methylpseudouridine(1915) in 23S rRNA + S-adenosyl-L-homocysteine + H(+). Specifically methylates the pseudouridine at position 1915 (m3Psi1915) in 23S rRNA. This is Ribosomal RNA large subunit methyltransferase H from Salmonella choleraesuis (strain SC-B67).